The sequence spans 518 residues: Membrane-bound lytic murein transglycosylase F (518 aa).

The first 21 residues, 1-21 (MKKLKINYLFIGILALLLAVA), serve as a signal peptide directing secretion. A non-LT domain region spans residues 22–269 (LWPSIPWFGK…RIEEKYLGHG (248 aa)). The segment at 270–518 (DDFDYVDTRT…SRKGSEEKQN (249 aa)) is LT domain. Glu-314 is a catalytic residue.

It in the N-terminal section; belongs to the bacterial solute-binding protein 3 family. The protein in the C-terminal section; belongs to the transglycosylase Slt family.

The protein localises to the cell outer membrane. It catalyses the reaction Exolytic cleavage of the (1-&gt;4)-beta-glycosidic linkage between N-acetylmuramic acid (MurNAc) and N-acetylglucosamine (GlcNAc) residues in peptidoglycan, from either the reducing or the non-reducing ends of the peptidoglycan chains, with concomitant formation of a 1,6-anhydrobond in the MurNAc residue.. Murein-degrading enzyme that degrades murein glycan strands and insoluble, high-molecular weight murein sacculi, with the concomitant formation of a 1,6-anhydromuramoyl product. Lytic transglycosylases (LTs) play an integral role in the metabolism of the peptidoglycan (PG) sacculus. Their lytic action creates space within the PG sacculus to allow for its expansion as well as for the insertion of various structures such as secretion systems and flagella. In Shigella boydii serotype 18 (strain CDC 3083-94 / BS512), this protein is Membrane-bound lytic murein transglycosylase F.